The following is a 138-amino-acid chain: Putative pre-16S rRNA nuclease (138 aa).

Belongs to the YqgF nuclease family.

It is found in the cytoplasm. Could be a nuclease involved in processing of the 5'-end of pre-16S rRNA. The polypeptide is Putative pre-16S rRNA nuclease (Geobacillus thermodenitrificans (strain NG80-2)).